Consider the following 293-residue polypeptide: Ribosomal protein L11 methyltransferase (293 aa).

S-adenosyl-L-methionine-binding residues include Thr145, Gly166, Asp188, and Asn230.

Belongs to the methyltransferase superfamily. PrmA family.

Its subcellular location is the cytoplasm. It catalyses the reaction L-lysyl-[protein] + 3 S-adenosyl-L-methionine = N(6),N(6),N(6)-trimethyl-L-lysyl-[protein] + 3 S-adenosyl-L-homocysteine + 3 H(+). Functionally, methylates ribosomal protein L11. In Shewanella putrefaciens (strain CN-32 / ATCC BAA-453), this protein is Ribosomal protein L11 methyltransferase.